A 617-amino-acid polypeptide reads, in one-letter code: 5-hydroxytryptamine receptor 2B (617 aa).

Topologically, residues 1–95 (MLKTVTTAMA…LLVKMIAMAV (95 aa)) are extracellular. Residues Asn-31, Asn-41, Asn-51, and Asn-58 are each glycosylated (N-linked (GlcNAc...) asparagine). A helical membrane pass occupies residues 96–116 (VLGLMILVTIIGNVFVIAAII). The Cytoplasmic portion of the chain corresponds to 117–128 (LERNLQNVANYL). A helical membrane pass occupies residues 129-149 (VASLAVADLFVACLVMPLGAV). The Extracellular segment spans residues 150 to 164 (YEISNGWILGPELCD). A disulfide bridge connects residues Cys-163 and Cys-242. The helical transmembrane segment at 165 to 185 (IWTSCDVLCCTASILHLVAIA) threads the bilayer. Over 186–205 (ADRYWTVTNIDYNNLRTPRR) the chain is Cytoplasmic. A helical membrane pass occupies residues 206-226 (VFLMIFCVWFAALIVSLAPQF). The Extracellular segment spans residues 227 to 256 (GWKDPDYMKRIEEQHCMVSQDVGYQIFATC). Residues 257-277 (CTFYVPLLVILFLYWKIYIIA) traverse the membrane as a helical segment. Over 278–534 (RKRIQRRAQK…EAKRERKAAQ (257 aa)) the chain is Cytoplasmic. Positions 309 to 336 (RSKRRAERKRLEAGERTPVDGDGTGGQL) are disordered. Residues 317-327 (KRLEAGERTPV) show a composition bias toward basic and acidic residues. The helical transmembrane segment at 535-555 (TLAIITGAFVICWLPFFVMAL) threads the bilayer. Over 556–570 (TMSLCKECEIHTAVA) the chain is Extracellular. Residues 571–591 (SLFLWLGYFNSTLNPVIYTIF) traverse the membrane as a helical segment. The Cytoplasmic portion of the chain corresponds to 592–617 (NPEFRRAFKRILFGRKAAARARSAKI).

The protein belongs to the G-protein coupled receptor 1 family.

It is found in the cell membrane. Functionally, this is one of the several different receptors for 5-hydroxytryptamine (serotonin), a biogenic hormone that functions as a neurotransmitter, a hormone, and a mitogen. The activity of this receptor is mediated by G proteins which inhibit adenylate cyclase. The protein is 5-hydroxytryptamine receptor 2B (5-HT1B) of Drosophila melanogaster (Fruit fly).